The following is a 152-amino-acid chain: Clitocypin-2 (152 aa).

It belongs to the protease inhibitor I48 family. As to quaternary structure, homodimer. Expressed in all analyzed tissues, but expression was higher in the pileus and in the lower part of the stipe.

Its function is as follows. Binds and inhibits cysteine proteinases. Inhibits most strongly papain and cathepsin L, more weakly bromelain and cathepsin B while it is completely ineffective against cathepsin H. The sequence is that of Clitocypin-2 (clt2) from Clitocybe nebularis (Clouded agaric).